The chain runs to 224 residues: Deoxyribose-phosphate aldolase (224 aa).

Asp-94 acts as the Proton donor/acceptor in catalysis. Lys-158 functions as the Schiff-base intermediate with acetaldehyde in the catalytic mechanism. Catalysis depends on Lys-187, which acts as the Proton donor/acceptor.

Belongs to the DeoC/FbaB aldolase family. DeoC type 1 subfamily. As to quaternary structure, homodimer.

The protein resides in the cytoplasm. It catalyses the reaction 2-deoxy-D-ribose 5-phosphate = D-glyceraldehyde 3-phosphate + acetaldehyde. With respect to regulation, activated by citrate. Inhibited by NaBH(4). Activity is independent of divalent metal cations. Its function is as follows. Catalyzes a reversible aldol reaction between acetaldehyde and D-glyceraldehyde 3-phosphate to generate 2-deoxy-D-ribose 5-phosphate. Could be involved in pentose biosynthesis. This Thermococcus kodakarensis (strain ATCC BAA-918 / JCM 12380 / KOD1) (Pyrococcus kodakaraensis (strain KOD1)) protein is Deoxyribose-phosphate aldolase.